The chain runs to 181 residues: Major urinary protein (181 aa).

The N-terminal stretch at 1–19 (MKLLLLLLCLGLTLVCGHA) is a signal peptide. N-linked (GlcNAc...) asparagine glycosylation occurs at N54. C83 and C176 are oxidised to a cystine.

The protein belongs to the calycin superfamily. Lipocalin family. Abundant in the urine of adult male rats but absent from that of females.

Its subcellular location is the cytoplasm. The protein resides in the cytosol. The protein localises to the secreted. In terms of biological role, major urinary proteins (Mups) bind and release pheromones. They may also protect pheromones from oxidation. In this context, they play a role in the regulation of social behaviors, such as aggression, mating, pup-suckling, territory establishment and dominance. Acts as a kairomone, detected by the prey vomeronasal organ and inducing fear reactions in mice. The protein is Major urinary protein of Rattus norvegicus (Rat).